The primary structure comprises 357 residues: MRKIIHVDMDCYFAAVEMRDFPEYRGKPLAVGGSRERRGVISTCNYEARRFGVRSAMATAYAQKLCPDLILVPGRMQVYKDVSSQIRAIFSRYTELIEPLSLDEAYLDVSDCKLHKGSATLIAEAIRRDILAETGLTASAGVAPVKFLAKVASDLNKPNGQYVIPPDKVPEFIRTLSLRQIPGVGKVTAEKLSSLGLNTCGDVQTYPKQELITRFGKFGAVLIERAQGIDDRGLSVSRERKSVGVETTLAQDIYTLEQCQQVMPGLIQELSTRLSRSAKDRQIHKQVVKLKFSDFKQTTIEHRSNDVSVMMFYELLAQAIARQDGRGIRLLGVAVGLSDKSLISEVDPLQTQLVLSI.

A UmuC domain is found at 4–185 (IIHVDMDCYF…LSLRQIPGVG (182 aa)). Aspartate 8 and aspartate 103 together coordinate Mg(2+). Glutamate 104 is an active-site residue.

Belongs to the DNA polymerase type-Y family. As to quaternary structure, monomer. The cofactor is Mg(2+).

The protein resides in the cytoplasm. The catalysed reaction is DNA(n) + a 2'-deoxyribonucleoside 5'-triphosphate = DNA(n+1) + diphosphate. Poorly processive, error-prone DNA polymerase involved in untargeted mutagenesis. Copies undamaged DNA at stalled replication forks, which arise in vivo from mismatched or misaligned primer ends. These misaligned primers can be extended by PolIV. Exhibits no 3'-5' exonuclease (proofreading) activity. May be involved in translesional synthesis, in conjunction with the beta clamp from PolIII. The polypeptide is DNA polymerase IV (Shewanella oneidensis (strain ATCC 700550 / JCM 31522 / CIP 106686 / LMG 19005 / NCIMB 14063 / MR-1)).